The primary structure comprises 23 residues: Hongotoxin-4 (23 aa).

It belongs to the short scorpion toxin superfamily. Potassium channel inhibitor family. Alpha-KTx 02 subfamily. Expressed by the venom gland.

It localises to the secreted. Its function is as follows. Potent selective inhibitor of Kv1/KCNA voltage-gated potassium channels. This is Hongotoxin-4 from Centruroides limbatus (Bark scorpion).